The sequence spans 379 residues: UDP-4-amino-4-deoxy-L-arabinose--oxoglutarate aminotransferase (379 aa).

Residue Lys-182 is modified to N6-(pyridoxal phosphate)lysine.

Belongs to the DegT/DnrJ/EryC1 family. ArnB subfamily. In terms of assembly, homodimer. Requires pyridoxal 5'-phosphate as cofactor.

It catalyses the reaction UDP-4-amino-4-deoxy-beta-L-arabinose + 2-oxoglutarate = UDP-beta-L-threo-pentopyranos-4-ulose + L-glutamate. It participates in nucleotide-sugar biosynthesis; UDP-4-deoxy-4-formamido-beta-L-arabinose biosynthesis; UDP-4-deoxy-4-formamido-beta-L-arabinose from UDP-alpha-D-glucuronate: step 2/3. The protein operates within bacterial outer membrane biogenesis; lipopolysaccharide biosynthesis. In terms of biological role, catalyzes the conversion of UDP-4-keto-arabinose (UDP-Ara4O) to UDP-4-amino-4-deoxy-L-arabinose (UDP-L-Ara4N). The modified arabinose is attached to lipid A and is required for resistance to polymyxin and cationic antimicrobial peptides. This Escherichia coli O157:H7 protein is UDP-4-amino-4-deoxy-L-arabinose--oxoglutarate aminotransferase.